Here is a 337-residue protein sequence, read N- to C-terminus: MTVRVGVVGTGVMGADHVRTLTGGVAGARVVAVSDADQGRGRAVAAEAGDEVVFHADPVDLIGDAGVDAVVVASPDHTHEALATACVEAGKPVLCEKPLAATAADCLRIVAHEVAKGRRLVQAGYMRRFDPSYVDMKRALDAGSIGDPVLVHCVHRNARALHFFTPEMPFTSAAVHEFDVVRWLLSSEIVRVTVHRTRSSSRAAARLADPRLLVLETAAGVTVDVEVFVNAQYGYDVRCELVGELGTVSLALPSTTVVRAGGAEGVAVHADFRTRFAEAYRLQLQAWVDAAARGEACGPSAWDGYAATAVAEACLRAQEDGTPVEVELADKPALYGT.

The protein belongs to the Gfo/Idh/MocA family. Homotetramer.

The catalysed reaction is myo-inositol + NAD(+) = scyllo-inosose + NADH + H(+). Its function is as follows. Involved in the oxidation of myo-inositol (MI) to 2-keto-myo-inositol (2KMI or 2-inosose). In Saccharopolyspora erythraea (strain ATCC 11635 / DSM 40517 / JCM 4748 / NBRC 13426 / NCIMB 8594 / NRRL 2338), this protein is Inositol 2-dehydrogenase 1.